We begin with the raw amino-acid sequence, 189 residues long: GTP cyclohydrolase 1 (189 aa).

Residues cysteine 79, histidine 82, and cysteine 150 each contribute to the Zn(2+) site.

Belongs to the GTP cyclohydrolase I family. As to quaternary structure, toroid-shaped homodecamer, composed of two pentamers of five dimers.

It carries out the reaction GTP + H2O = 7,8-dihydroneopterin 3'-triphosphate + formate + H(+). It participates in cofactor biosynthesis; 7,8-dihydroneopterin triphosphate biosynthesis; 7,8-dihydroneopterin triphosphate from GTP: step 1/1. This Rickettsia massiliae (strain Mtu5) protein is GTP cyclohydrolase 1.